Consider the following 252-residue polypeptide: Probable transcriptional regulatory protein Fnod_1106 (252 aa).

It belongs to the TACO1 family.

Its subcellular location is the cytoplasm. In Fervidobacterium nodosum (strain ATCC 35602 / DSM 5306 / Rt17-B1), this protein is Probable transcriptional regulatory protein Fnod_1106.